Reading from the N-terminus, the 478-residue chain is MGRCCFYTAGTLSLLLLVTSVTLLVARVFQKAVDQTIEKNMVLQNGTKVFNSWEKPPLPVYIQFYFFNVTNPEEILQGEIPLLEEVGPYTYRELRNKANIQFGENGTTISAVTNKAYVFERNQSVGDPNVDLIRTINIPLLTVVDLAQLTLLRELIEAMLKAYQQKLFVIHTVHELLWGYKDEILSLVHIFKPDVSPNFGLFYERNGTNDGEYVFLTGEDNYLNFSKIVEWNGKTSLDWWTTDTCNMINGTDGDSFHPLISKDEVLYLFPSDLCRSVHITFSSFENVEGLPAFRYKVPAEILANTSENAGFCIPEGNCMDSGVLNISICKNGAPIIMSFPHFYQADEKFVSAIKGMHPNKEEHESFVDINPLTGIILRGAKRFQINTYVRKLDDFVETGDIRTMVFPVMYLNESVLIDKETANQLKSVINTTLVVTNIPYIIMALGVFFGLVFTWLACRGQGSMDEGTADERAPLIRT.

Topologically, residues 1 to 4 (MGRC) are cytoplasmic. A helical transmembrane segment spans residues 5-27 (CFYTAGTLSLLLLVTSVTLLVAR). Over 28-433 (VFQKAVDQTI…QLKSVINTTL (406 aa)) the chain is Lumenal. Residues N45, N68, N105, and N122 are each glycosylated (N-linked (GlcNAc...) asparagine). The important for interaction with GBA1 stretch occupies residues 155-191 (LIEAMLKAYQQKLFVIHTVHELLWGYKDEILSLVHIF). Residues N206, N224, N249, and N304 are each glycosylated (N-linked (GlcNAc...) asparagine). Cystine bridges form between C274-C329 and C312-C318. N-linked (GlcNAc...) asparagine glycosylation is found at N325, N412, and N430. The helical transmembrane segment at 434–459 (VVTNIPYIIMALGVFFGLVFTWLACR) threads the bilayer. Residues 460-478 (GQGSMDEGTADERAPLIRT) are Cytoplasmic-facing.

It belongs to the CD36 family. As to quaternary structure, interacts with GBA1. Acylated by palmitic acid group(s). In terms of processing, heavily glycosylated. In terms of tissue distribution, detected in the extracts of brain, heart, lung, liver and kidney.

Its subcellular location is the lysosome membrane. Functionally, acts as a lysosomal receptor for glucosylceramidase (GBA1) targeting. The sequence is that of Lysosome membrane protein 2 (Scarb2) from Mus musculus (Mouse).